We begin with the raw amino-acid sequence, 341 residues long: Cell division protein FtsQ (341 aa).

Residues 1-126 are Cytoplasmic-facing; sequence MTETDEGAPV…VARGVVRGLK (126 aa). The helical transmembrane segment at 127 to 147 threads the bilayer; that stretch reads TLFATVMFSIAGFGLGLALYV. The Extracellular portion of the chain corresponds to 148 to 341; the sequence is TPAMSVRNIV…VSSPDLPTVK (194 aa). In terms of domain architecture, POTRA spans 151 to 219; that stretch reads MSVRNIVVTG…SALRITIVER (69 aa).

Belongs to the FtsQ/DivIB family. FtsQ subfamily.

It is found in the cell membrane. Essential cell division protein. This Mycobacterium leprae (strain Br4923) protein is Cell division protein FtsQ.